The following is a 121-amino-acid chain: Flagellar protein FliT (121 aa).

Residues 1-50 are required for homodimerization; the sequence is MNNAPHLYFAWQQLVEKSQLMLRLATEEQWDELITSEMAYVNAVQEIAHL. The tract at residues 60-98 is fliD binding; it reads MQEQLRPMLRLILDNESKVKQLLQIRMDELAKLVGQSSV.

Belongs to the FliT family. Homodimer. Interacts with FliD and FlhC.

It localises to the cytoplasm. Its subcellular location is the cytosol. Dual-function protein that regulates the transcription of class 2 flagellar operons and that also acts as an export chaperone for the filament-capping protein FliD. As a transcriptional regulator, acts as an anti-FlhDC factor; it directly binds FlhC, thus inhibiting the binding of the FlhC/FlhD complex to class 2 promoters, resulting in decreased expression of class 2 flagellar operons. As a chaperone, effects FliD transition to the membrane by preventing its premature polymerization, and by directing it to the export apparatus. The protein is Flagellar protein FliT of Escherichia coli (strain 55989 / EAEC).